A 350-amino-acid polypeptide reads, in one-letter code: Transmembrane protein 185A (350 aa).

7 consecutive transmembrane segments (helical) span residues 16–36 (LIYA…DGII), 41–61 (WAVF…ASVG), 81–101 (FKAM…EVLV), 111–131 (FWLL…AACV), 177–197 (ILMS…VLFL), 211–231 (ITMA…EILL), and 240–260 (AFSC…LMAT). The mediates interaction with MAP1B stretch occupies residues 298–350 (DLHHEDNEETEETPVPEPPKIAPMFRKKARVVITQSPGKYALPPPKLNIEMPD).

Belongs to the TMEM185 family. In terms of assembly, interacts with MAP1B.

It localises to the cell projection. It is found in the dendrite. The protein localises to the membrane. The sequence is that of Transmembrane protein 185A (TMEM185A) from Pongo abelii (Sumatran orangutan).